The chain runs to 80 residues: Trefoil factor 3 (80 aa).

A signal peptide spans 1–21 (MEARMFWLLVVLLALASSSSA). The 44-residue stretch at 30–73 (NQCAVPAKDRVDCGYPQVTPEQCNNRGCCFDSSIXGVPWCFKPL) folds into the P-type domain. 3 disulfides stabilise this stretch: Cys-32-Cys-58, Cys-42-Cys-57, and Cys-52-Cys-69.

In terms of assembly, monomer. Homodimer; disulfide-linked.

The protein resides in the secreted. The protein localises to the extracellular space. It is found in the extracellular matrix. Its subcellular location is the cytoplasm. Its function is as follows. Involved in the maintenance and repair of the intestinal mucosa. Promotes the mobility of epithelial cells in healing processes (motogen). The protein is Trefoil factor 3 (TFF3) of Sus scrofa (Pig).